The chain runs to 226 residues: MMSSVRTGASMALRARPTAQIVPFRAAAVASISSSSRKDATGAVAPAGAQHGIARRERREVPLPSQEGTKGAVQYALTTLDSIVNWARQSSLWPMTFGLACCAVEMMHLSTPRYDQDRLGIIFRASPRQSDVMIVAGTLTNKMAPALRQVYDQMPDPRWVISMGSCANGGGYYHYSYSVVRGCDRIVPVDIYVPGCPPTSEALMYGIFQLQRKMRNTKITRMWYRK.

Positions 40-68 (ATGAVAPAGAQHGIARRERREVPLPSQEG) are disordered. Cysteine 101, cysteine 102, cysteine 166, and cysteine 196 together coordinate [4Fe-4S] cluster.

It belongs to the complex I 20 kDa subunit family. As to quaternary structure, complex I is composed of about 40 different subunits. This is a component of the iron-sulfur (IP) fragment of the enzyme. It depends on [4Fe-4S] cluster as a cofactor.

The protein resides in the mitochondrion. The enzyme catalyses a ubiquinone + NADH + 5 H(+)(in) = a ubiquinol + NAD(+) + 4 H(+)(out). In terms of biological role, core subunit of the mitochondrial membrane respiratory chain NADH dehydrogenase (Complex I) that is believed to belong to the minimal assembly required for catalysis. Complex I functions in the transfer of electrons from NADH to the respiratory chain. The immediate electron acceptor for the enzyme is believed to be ubiquinone. This Neurospora crassa (strain ATCC 24698 / 74-OR23-1A / CBS 708.71 / DSM 1257 / FGSC 987) protein is NADH-ubiquinone oxidoreductase 19.3 kDa subunit, mitochondrial.